The primary structure comprises 1095 residues: Putative patatin-like phospholipase domain-containing protein M110.7 (1095 aa).

A helical transmembrane segment spans residues 9 to 29 (LLLIFENILELCMCITLVILI). The tract at residues 75–113 (HKKRSSKEEMTPDKKRDSSEKISKQPPRELFEPNEQEQV) is disordered. Basic and acidic residues predominate over residues 80–105 (SKEEMTPDKKRDSSEKISKQPPRELF). A nucleoside 3',5'-cyclic phosphate contacts are provided by residues 144–237 (VETL…LTSF), 327–416 (RKYE…IQFL), and 450–509 (IETG…TVMA). The 168-residue stretch at 768-935 (IVFGGGGARG…VNNLPADIMR (168 aa)) folds into the PNPLA domain. The GXGXXG motif lies at 772–777 (GGGARG). The GXSXG signature appears at 799–803 (GTSIG). The active-site Nucleophile is serine 801. Aspartate 922 acts as the Proton acceptor in catalysis. The DGA/G signature appears at 922–924 (DGA).

The protein belongs to the NTE family.

It localises to the membrane. In Caenorhabditis elegans, this protein is Putative patatin-like phospholipase domain-containing protein M110.7.